The chain runs to 509 residues: Histidine--tRNA ligase (509 aa).

The protein belongs to the class-II aminoacyl-tRNA synthetase family. As to quaternary structure, homodimer.

Its subcellular location is the cytoplasm. The enzyme catalyses tRNA(His) + L-histidine + ATP = L-histidyl-tRNA(His) + AMP + diphosphate + H(+). This is Histidine--tRNA ligase from Rhodopseudomonas palustris (strain TIE-1).